A 31-amino-acid polypeptide reads, in one-letter code: Cytochrome b6-f complex subunit 6 (31 aa).

The helical transmembrane segment at 4–24 threads the bilayer; sequence ITSFFGFLLAALTITSVLFIG.

The protein belongs to the PetL family. The 4 large subunits of the cytochrome b6-f complex are cytochrome b6, subunit IV (17 kDa polypeptide, PetD), cytochrome f and the Rieske protein, while the 4 small subunits are PetG, PetL, PetM and PetN. The complex functions as a dimer.

It is found in the plastid. Its subcellular location is the chloroplast thylakoid membrane. Functionally, component of the cytochrome b6-f complex, which mediates electron transfer between photosystem II (PSII) and photosystem I (PSI), cyclic electron flow around PSI, and state transitions. PetL is important for photoautotrophic growth as well as for electron transfer efficiency and stability of the cytochrome b6-f complex. The chain is Cytochrome b6-f complex subunit 6 from Oenothera elata subsp. hookeri (Hooker's evening primrose).